The following is a 389-amino-acid chain: E3 ubiquitin-protein ligase E3D (389 aa).

Alanine 2 is modified (N-acetylalanine). The BRAT1-like motif motif lies at 129–159 (PLPGDNWGALVDEWCCHPDPFANKPLHPREN). Cysteine 144 is a Zn(2+) binding site. The interval 235 to 257 (LPSERNFPIIPRSQFVQSVLAQC) is interaction with UBE2C. The segment at 353–389 (LPSTTCLELLLILSKSNATLPPSLRCMNSFQVAFLKM) is HECT-like.

As to quaternary structure, interacts with UBE2C/UbcH10 (E2 ubiquitin-conjugating enzyme). In vitro, interacts with cyclin-B. Post-translationally, ubiquitinated by UBCH10 (E2 ubiquitin-conjugating enzyme).

The protein localises to the cytoplasm. It carries out the reaction S-ubiquitinyl-[E2 ubiquitin-conjugating enzyme]-L-cysteine + [acceptor protein]-L-lysine = [E2 ubiquitin-conjugating enzyme]-L-cysteine + N(6)-ubiquitinyl-[acceptor protein]-L-lysine.. Its pathway is protein modification; protein ubiquitination. Functionally, E3 ubiquitin-protein ligase which accepts ubiquitin from specific E2 ubiquitin-conjugating enzymes, and transfers it to substrates, generally promoting their degradation by the proteasome. Independently of its E3 ubiquitin-protein ligase activity, acts as an inhibitor of CPSF3 endonuclease activity by blocking CPSF3 active site. The polypeptide is E3 ubiquitin-protein ligase E3D (UBE3D) (Bos taurus (Bovine)).